The sequence spans 495 residues: MASGILVNIKEEVTCPICLELLTEPLSLHCGHSFCQACITANHKKSMLYKEGERSCPVCRISYQPENIRPNRHVANIVEKLREVKLSPEEGQKVDHCARHGEKLLLFCQEDRKVICWLCERSQEHRGHHTFLMEEVAQEYHVKLQTALEMLRQKQQEAEKLEADIREEKASWKIQIDYDKTNVLADFEQLREILDWEESNELQNLEKEEEDILKSLTKSETEMVQQTQYMRELVSDLEHRLQGSVMELLQGVDGIIKRIEDMTLKKPKTFPKNQRRVFRAPDLKGMLDMFRELTDVRRYWVDVTLAPNNISHAVIAEDKRRVSSPNPQIMYRAQGTLFQSLKNFIYCTGVLGSQSITSGKHYWEVDVSKKSAWILGVCAGFQPDAMYNIEQNENYQPKYGYWVIGLQEGVKYSVFQDGSSHTPFAPFIVPLSVIICPDRVGVFVDYEACTVSFFNITNHGFLIYKFSQCSFSKPVFPYLNPRKCTVPMTLCSPSS.

Alanine 2 bears the N-acetylalanine mark. The RING-type zinc-finger motif lies at 15 to 60 (CPICLELLTEPLSLHCGHSFCQACITANHKKSMLYKEGERSCPVCR). Serine 87 is modified (phosphoserine). The segment at 92–133 (QKVDHCARHGEKLLLFCQEDRKVICWLCERSQEHRGHHTFLM) adopts a B box-type zinc-finger fold. The Zn(2+) site is built by cysteine 97, histidine 100, cysteine 119, and histidine 125. Positions 137–225 (AQEYHVKLQT…LTKSETEMVQ (89 aa)) form a coiled coil. Positions 187–200 (FEQLREILDWEESN) are required for interaction with GABARAP and for autophagy. Residues 283–495 (LKGMLDMFRE…VPMTLCSPSS (213 aa)) form the B30.2/SPRY domain.

It belongs to the TRIM/RBCC family. In terms of assembly, can form homodimers and homotrimers. In addition to lower-order dimerization, also exhibits a higher-order multimerization and both low- and high-order multimerizations are essential for its restriction activity. Interacts with BTBD1 and BTBD2. Interacts with PSMC4, PSMC5, PSMD7 and HSPA8/HSC70. Interacts (via B30.2/SPRY domain) with HSPA1A/B. Interacts with PSMC2, MAP3K7/TAK1, TAB2 and TAB3. Interacts with SQSTM1. Interacts with TRIM6 and TRIM34. Interacts with ULK1 (phosphorylated form), GABARAP, GABARAPL1, GABARAPL2, MAP1LC3A, MAP1LC3C and BECN1. In terms of processing, degraded in a proteasome-independent fashion in the absence of viral infection but in a proteasome-dependent fashion following exposure to restriction sensitive virus. Autoubiquitinated in a RING finger- and UBE2D2-dependent manner. Monoubiquitinated by TRIM21. Deubiquitinated by Yersinia YopJ. Ubiquitination may not lead to proteasomal degradation.

It localises to the cytoplasm. It is found in the nucleus. The enzyme catalyses S-ubiquitinyl-[E2 ubiquitin-conjugating enzyme]-L-cysteine + [acceptor protein]-L-lysine = [E2 ubiquitin-conjugating enzyme]-L-cysteine + N(6)-ubiquitinyl-[acceptor protein]-L-lysine.. Its pathway is protein modification; protein ubiquitination. Capsid-specific restriction factor that prevents infection from non-host-adapted retroviruses. Blocks viral replication early in the life cycle, after viral entry but before reverse transcription. In addition to acting as a capsid-specific restriction factor, also acts as a pattern recognition receptor that activates innate immune signaling in response to the retroviral capsid lattice. Binding to the viral capsid triggers its E3 ubiquitin ligase activity, and in concert with the heterodimeric ubiquitin conjugating enzyme complex UBE2V1-UBE2N (also known as UBC13-UEV1A complex) generates 'Lys-63'-linked polyubiquitin chains, which in turn are catalysts in the autophosphorylation of the MAP3K7/TAK1 complex (includes TAK1, TAB2, and TAB3). Activation of the MAP3K7/TAK1 complex by autophosphorylation results in the induction and expression of NF-kappa-B and MAPK-responsive inflammatory genes, thereby leading to an innate immune response in the infected cell. Plays a role in regulating autophagy through activation of autophagy regulator BECN1 by causing its dissociation from its inhibitors BCL2 and TAB2. In Colobus guereza (Mantled guereza), this protein is Tripartite motif-containing protein 5 (TRIM5).